The primary structure comprises 857 residues: Linoleate 9S-lipoxygenase 6 (857 aa).

Residues asparagine 26–alanine 156 form the PLAT domain. One can recognise a Lipoxygenase domain in the interval proline 159 to isoleucine 857. The interval asparagine 205 to glutamate 243 is disordered. A compositionally biased stretch (polar residues) spans glutamine 208–glycine 218. Residues histidine 518, histidine 523, histidine 709, asparagine 713, and isoleucine 857 each coordinate Fe cation.

It belongs to the lipoxygenase family. As to quaternary structure, monomer. The cofactor is Fe cation. In terms of tissue distribution, expressed in tubers and roots. Detected in leaves, petioles and stems.

The protein localises to the cytoplasm. The enzyme catalyses (9Z,12Z)-octadecadienoate + O2 = (9S)-hydroperoxy-(10E,12Z)-octadecadienoate. Its pathway is lipid metabolism; oxylipin biosynthesis. In terms of biological role, plant lipoxygenases may be involved in a number of diverse aspects of plant physiology including growth and development, pest resistance, and senescence or responses to wounding. Catalyzes the hydroperoxidation of lipids containing a cis,cis-1,4-pentadiene structure. Linoleic and linolenic acids are the preferred substrates, but is also active with arachidonic acid. The products are almost exclusively the S enantiomers. The chain is Linoleate 9S-lipoxygenase 6 (LOX1.6) from Solanum tuberosum (Potato).